Reading from the N-terminus, the 865-residue chain is ABC transporter ATP-binding/permease protein Rv1747 (865 aa).

The region spanning 29 to 78 is the FHA 1 domain; it reads VVVGRDLRADVRVAHPLISRAHLLLRFDQGRWVAIDNGSLNGLYLNNRRV. Positions 104–205 are disordered; it reads GRHRGSAGRP…PAGARGGTEA (102 aa). Positions 135–156 are enriched in low complexity; the sequence is PQTGTLGSGQLQQLPPATTRIP. Residue Thr-152 is modified to Phosphothreonine. Positions 157–166 are enriched in pro residues; the sequence is AAPPSGPQPR. A Phosphothreonine modification is found at Thr-210. The FHA 2 domain maps to 230 to 279; the sequence is VRIGRANDNDIVIPEVLASRHHATLVPTPGGTEIRDNRSINGTFVNGARV. The ABC transporter domain occupies 319-552; that stretch reads LDVRGVTWTI…VMGTTNWADI (234 aa). 352–359 provides a ligand contact to ATP; it reads GPSGAGKS. The region spanning 596 to 810 is the ABC transmembrane type-2 domain; the sequence is RQFSTIARRQ…TPARWGFAAS (215 aa). 6 helical membrane-spanning segments follow: residues 614-634, 652-672, 700-720, 740-760, 767-787, and 836-856; these read GYFVFLALLPFIMGALSMSVP, PGQILVLLNVGAVFMGTALTI, VCVYTVLAVVQSAIVTVIVLV, FVDVAVTCVASAMLGLALSAI, IMPLLVVAVMSQLVFSGGMIP, and SAWWFDMAMLVALSVIYVGFV.

In the central section; belongs to the ABC transporter superfamily. It in the C-terminal section; belongs to the ABC-2 integral membrane protein family. Homodimer. Interacts with PknF. Phosphorylated by PknF. Can probably be phosphorylated in vivo by other kinases when PknF is missing.

The protein localises to the cell membrane. With respect to regulation, function is positively regulated by phosphorylation. In terms of biological role, involved in the translocation of an unknown substrate across the membrane. Transmembrane domains (TMD) form a pore in the membrane and the ATP-binding domain (NBD) is responsible for energy generation. Required for virulence. The protein is ABC transporter ATP-binding/permease protein Rv1747 of Mycobacterium tuberculosis (strain ATCC 25618 / H37Rv).